We begin with the raw amino-acid sequence, 260 residues long: Snake venom serine protease KN6 (260 aa).

A signal peptide spans 1-18 (MVLIRVLANLLILQLSYA). Residues 19–24 (QKSSEL) constitute a propeptide that is removed on maturation. A Peptidase S1 domain is found at 25–251 (VIGGDECNIN…HLDWIQSIIA (227 aa)). 5 cysteine pairs are disulfide-bonded: Cys31–Cys165, Cys100–Cys258, Cys144–Cys212, Cys176–Cys191, and Cys202–Cys227. The active-site Charge relay system is His67. Asn105 carries N-linked (GlcNAc...) asparagine glycosylation. Asp112 functions as the Charge relay system in the catalytic mechanism. Asn172 is a glycosylation site (N-linked (GlcNAc...) asparagine). Catalysis depends on Ser206, which acts as the Charge relay system. Residues Asn213 and Asn255 are each glycosylated (N-linked (GlcNAc...) asparagine).

Belongs to the peptidase S1 family. Snake venom subfamily. In terms of assembly, monomer. In terms of tissue distribution, expressed by the venom gland.

It localises to the secreted. Functionally, snake venom serine protease that may act in the hemostasis system of the prey. This is Snake venom serine protease KN6 from Trimeresurus stejnegeri (Chinese green tree viper).